A 271-amino-acid chain; its full sequence is NH(3)-dependent NAD(+) synthetase (271 aa).

43-50 contributes to the ATP binding site; that stretch reads GISGGQDS. Aspartate 49 provides a ligand contact to Mg(2+). Arginine 137 provides a ligand contact to deamido-NAD(+). Threonine 157 is an ATP binding site. A Mg(2+)-binding site is contributed by glutamate 162. Residues lysine 170 and aspartate 177 each contribute to the deamido-NAD(+) site. ATP is bound by residues lysine 186 and threonine 208. 257–258 contributes to the deamido-NAD(+) binding site; sequence HK.

The protein belongs to the NAD synthetase family. As to quaternary structure, homodimer.

It carries out the reaction deamido-NAD(+) + NH4(+) + ATP = AMP + diphosphate + NAD(+) + H(+). Its pathway is cofactor biosynthesis; NAD(+) biosynthesis; NAD(+) from deamido-NAD(+) (ammonia route): step 1/1. Catalyzes the ATP-dependent amidation of deamido-NAD to form NAD. Uses ammonia as a nitrogen source. This is NH(3)-dependent NAD(+) synthetase from Exiguobacterium sp. (strain ATCC BAA-1283 / AT1b).